Here is a 120-residue protein sequence, read N- to C-terminus: Chaperonin GroEL (120 aa).

An ATP-binding site is contributed by 23–27 (DGTTT).

This sequence belongs to the chaperonin (HSP60) family. In terms of assembly, forms a cylinder of 14 subunits composed of two heptameric rings stacked back-to-back. Interacts with the co-chaperonin GroES.

It is found in the cytoplasm. The catalysed reaction is ATP + H2O + a folded polypeptide = ADP + phosphate + an unfolded polypeptide.. In terms of biological role, together with its co-chaperonin GroES, plays an essential role in assisting protein folding. The GroEL-GroES system forms a nano-cage that allows encapsulation of the non-native substrate proteins and provides a physical environment optimized to promote and accelerate protein folding. This chain is Chaperonin GroEL, found in Mycobacterium gordonae.